Here is a 610-residue protein sequence, read N- to C-terminus: MKHQRVPVMILHSKGTMASWPFSRLWSISDPILFQVTLVATLLATVLGSCGIPPYLDFAFPINELNETRFETGTTLRYTCRPGYRISSRKNFLICDGTDNWKYKEFCVKKRCENPGELLNGQVIVKTDYSFGSEIEFSCSEGYVLIGSANSYCQLQDKGVVWSDPLPQCIIAKCEPPPTISNGRHNGGDEDFYTYGSSVTYSCDRDFSMLGKASISCRVENKTIGVWSPSPPSCKKVICVQPVVKDGKITSGFGPIYTYQQSIVYACNKGFRLEGDSLIHCEADNSWNPPPPTCELNGCLGLPHIPHALWERYDHQTQTEQQVYDIGFVLSYKCHFGYKPETDGPTTVTCQSNLEWSPYIECKEVCCPEPNLNNYGSITLHRRPSTSTHCTYISGDKISYECHSKYMFDALCTKHGTWSPRTPECRPDCKSPPVIAHGQHKVVSKFFTFDHQAVYECDKGYILVGAKELSCTSSGWSPAVPQCKALCLKPEIEYGRLSVEKVRYVEPEIITIQCESGYSVVGSENITCSEDRTWYPEVPKCEWEYPEGCEQVVTGRKLLQCLSRPEEVKLALEVYKLSLEIEILQTNKLKKEAFLLREREKNVTCDFNPE.

Residues 1–48 form the signal peptide; sequence MKHQRVPVMILHSKGTMASWPFSRLWSISDPILFQVTLVATLLATVLG. Sushi domains lie at 49–109, 110–171, 172–236, 237–296, 297–364, 365–427, 428–485, and 486–543; these read SCGI…FCVK, KRCE…QCII, AKCE…SCKK, VICV…TCEL, NGCL…ECKE, VCCP…ECRP, DCKS…QCKA, and LCLK…KCEW. Intrachain disulfides connect cysteine 50–cysteine 95, cysteine 80–cysteine 107, cysteine 112–cysteine 153, cysteine 139–cysteine 169, cysteine 174–cysteine 217, cysteine 203–cysteine 234, cysteine 239–cysteine 281, cysteine 267–cysteine 294, cysteine 299–cysteine 350, cysteine 334–cysteine 362, cysteine 367–cysteine 412, cysteine 402–cysteine 425, cysteine 429–cysteine 471, cysteine 457–cysteine 483, cysteine 487–cysteine 528, and cysteine 514–cysteine 541. An N-linked (GlcNAc...) asparagine glycan is attached at asparagine 66. An N-linked (GlcNAc...) asparagine glycan is attached at asparagine 221. N-linked (GlcNAc...) asparagine glycans are attached at residues asparagine 525 and asparagine 602.

Disulfide-linked complex of alpha and beta chains.

It is found in the secreted. In terms of biological role, controls the classical pathway of complement activation. It binds as a cofactor to C3b/C4b inactivator (C3bINA), which then hydrolyzes the complement fragment C4b. It also accelerates the degradation of the C4bC2a complex (C3 convertase) by dissociating the complement fragment C2a. Alpha chain binds C4b. It also interacts with serum amyloid P component. The chain is C4b-binding protein alpha chain (C4BPA) from Bos taurus (Bovine).